The primary structure comprises 423 residues: Serine--tRNA ligase (423 aa).

An L-serine-binding site is contributed by 228–230; it reads TSE. Residue 259–261 coordinates ATP; sequence RLE. Glutamate 282 is an L-serine binding site. 346 to 349 is an ATP binding site; sequence EISS. Position 384 (serine 384) interacts with L-serine.

The protein belongs to the class-II aminoacyl-tRNA synthetase family. Type-1 seryl-tRNA synthetase subfamily. In terms of assembly, homodimer. The tRNA molecule binds across the dimer.

The protein localises to the cytoplasm. The catalysed reaction is tRNA(Ser) + L-serine + ATP = L-seryl-tRNA(Ser) + AMP + diphosphate + H(+). It catalyses the reaction tRNA(Sec) + L-serine + ATP = L-seryl-tRNA(Sec) + AMP + diphosphate + H(+). It participates in aminoacyl-tRNA biosynthesis; selenocysteinyl-tRNA(Sec) biosynthesis; L-seryl-tRNA(Sec) from L-serine and tRNA(Sec): step 1/1. Catalyzes the attachment of serine to tRNA(Ser). Is also able to aminoacylate tRNA(Sec) with serine, to form the misacylated tRNA L-seryl-tRNA(Sec), which will be further converted into selenocysteinyl-tRNA(Sec). The protein is Serine--tRNA ligase of Ehrlichia canis (strain Jake).